Consider the following 332-residue polypeptide: Ribosomal RNA small subunit methyltransferase H (332 aa).

S-adenosyl-L-methionine contacts are provided by residues Gly34–His36, Asp59, Phe86, Asp112, and Gln119.

The protein belongs to the methyltransferase superfamily. RsmH family.

Its subcellular location is the cytoplasm. It catalyses the reaction cytidine(1402) in 16S rRNA + S-adenosyl-L-methionine = N(4)-methylcytidine(1402) in 16S rRNA + S-adenosyl-L-homocysteine + H(+). Its function is as follows. Specifically methylates the N4 position of cytidine in position 1402 (C1402) of 16S rRNA. The polypeptide is Ribosomal RNA small subunit methyltransferase H (Chlorobium phaeobacteroides (strain BS1)).